Reading from the N-terminus, the 369-residue chain is Cyanuric acid amidohydrolase (369 aa).

An RU A region spans residues 1–100 (MPRRAEILRL…HWLVIAAREA (100 aa)). Substrate contacts are provided by residues R53 and 81–82 (SG). Positions 106–242 (ALAVGQARTP…HEVVVMGMSP (137 aa)) are RU B. K155 is an active-site residue. Substrate contacts are provided by residues R187 and 225 to 226 (SA). Residue S225 is the Nucleophile of the active site. Residues 248-369 (LVIDHAVMAD…ARRSGAAGPA (122 aa)) are RU C. A Mg(2+)-binding site is contributed by E296. Residues R323 and 342 to 343 (SG) each bind substrate. Mg(2+)-binding residues include A345, Q348, G349, P350, and G353.

The protein belongs to the cyclic amide hydrolase (CyAH) family. In terms of assembly, homotetramer.

It carries out the reaction cyanurate + H2O = 1-carboxybiuret + H(+). The protein operates within xenobiotic degradation; atrazine degradation; biuret from cyanurate: step 1/1. With respect to regulation, inhibited by barbituric acid. Its function is as follows. Responsible for the hydrolysis of cyanuric acid, an intermediate formed during catabolism of s-triazine based compounds in herbicides such as atrazine and polymers such as melamine. Catalyzes the hydrolytic opening of the s-triazine ring of cyanuric acid (2,4,6-trihydroxy-s-triazine) to yield carbon dioxide and carboxybiuret, which spontaneously decarboxylates to biuret. The protein is Cyanuric acid amidohydrolase of Methylobacterium sp. (strain 4-46).